Reading from the N-terminus, the 104-residue chain is Thioredoxin (104 aa).

Residues 2–104 (AIVKATDQSF…ALQELVNKHL (103 aa)) form the Thioredoxin domain. Cysteine 29 and cysteine 32 form a disulfide bridge.

It belongs to the thioredoxin family.

In terms of biological role, participates in various redox reactions through the reversible oxidation of its active center dithiol to a disulfide and catalyzes dithiol-disulfide exchange reactions. This Bacillus subtilis (strain 168) protein is Thioredoxin (trxA).